The sequence spans 313 residues: RHOMBOID-like protein 7 (313 aa).

The segment covering 1–11 has biased composition (acidic residues); it reads MLSTAAEEDPE. A disordered region spans residues 1–24; sequence MLSTAAEEDPEGGSRETNNGGETT. Residues 15–24 are compositionally biased toward polar residues; the sequence is RETNNGGETT. Helical transmembrane passes span 31–51, 112–132, 143–163, 166–186, 196–216, 221–241, and 269–289; these read SWIIPIVVIANVVVFVVVMYY, WLHAGVIHLLANMCCVAYIGV, VGTIYLVSGFCGSILSCLFLE, ISVGASSALFGLLGAMLSELL, GVAIVMLLVIVGVNLGLGTLP, FAHIGGFFGGFLLGFLLLIHP, and LCIVASIVFVAGFTSGLVILF. Ser-171 (nucleophile) is an active-site residue. The active-site Charge relay system is His-223.

The protein belongs to the peptidase S54 family.

It localises to the membrane. It catalyses the reaction Cleaves type-1 transmembrane domains using a catalytic dyad composed of serine and histidine that are contributed by different transmembrane domains.. Its function is as follows. Probable rhomboid-type serine protease that catalyzes intramembrane proteolysis. May function in embryo development. This is RHOMBOID-like protein 7 from Arabidopsis thaliana (Mouse-ear cress).